A 121-amino-acid polypeptide reads, in one-letter code: MPGMSRHNQSVGAYGERCALRHLITAGLRPVARNWRCPHGEIDIIAWDGPVLAICEVKTRRTDTFGTPTAAVTGTKARRLRLLAARWLAETGTRADEVRFDVLSIRLTGGPPHVEHLKGAF.

It belongs to the UPF0102 family.

The protein is UPF0102 protein Strop_1320 of Salinispora tropica (strain ATCC BAA-916 / DSM 44818 / JCM 13857 / NBRC 105044 / CNB-440).